Reading from the N-terminus, the 146-residue chain is VHLTGDEKSAVAALWGKVNVEEVGGEALGRLLVVYPWTQRFFESFGALSSPDAVMGNPKVKAHGKKVLGAFSDGLAHLDNLKGTFAQLSELHCDKLHVDPENFRLLGNVLVCVLARNFGKEFTPLLQAAFQKVVAGVATALAHKYH.

The Globin domain maps to 2–146; it reads HLTGDEKSAV…VATALAHKYH (145 aa). The residue at position 50 (S50) is a Phosphoserine. 2 residues coordinate heme b: H63 and H92.

Belongs to the globin family. Heterotetramer of two delta chains and two alpha chains. As to expression, red blood cells.

This chain is Hemoglobin subunit delta (HBD), found in Aotus trivirgatus (Three-striped night monkey).